We begin with the raw amino-acid sequence, 764 residues long: Phosphoribosylformylglycinamidine synthase subunit PurL (764 aa).

Residues 1–23 are disordered; that stretch reads MTQEVDTVERAAATPDHPQPYRE. The active site involves His57. Positions 60 and 104 each coordinate ATP. Glu106 is a binding site for Mg(2+). Substrate contacts are provided by residues 107-110 and Arg129; that span reads SHNH. Residue His108 is the Proton acceptor of the active site. Asp130 lines the Mg(2+) pocket. A substrate-binding site is contributed by Gln258. Position 286 (Asp286) interacts with Mg(2+). 330–332 contributes to the substrate binding site; it reads ESQ. Residues Asn518 and Gly555 each coordinate ATP. Asn556 lines the Mg(2+) pocket. Ser558 contributes to the substrate binding site.

Belongs to the FGAMS family. As to quaternary structure, monomer. Part of the FGAM synthase complex composed of 1 PurL, 1 PurQ and 2 PurS subunits.

It localises to the cytoplasm. The enzyme catalyses N(2)-formyl-N(1)-(5-phospho-beta-D-ribosyl)glycinamide + L-glutamine + ATP + H2O = 2-formamido-N(1)-(5-O-phospho-beta-D-ribosyl)acetamidine + L-glutamate + ADP + phosphate + H(+). It functions in the pathway purine metabolism; IMP biosynthesis via de novo pathway; 5-amino-1-(5-phospho-D-ribosyl)imidazole from N(2)-formyl-N(1)-(5-phospho-D-ribosyl)glycinamide: step 1/2. Functionally, part of the phosphoribosylformylglycinamidine synthase complex involved in the purines biosynthetic pathway. Catalyzes the ATP-dependent conversion of formylglycinamide ribonucleotide (FGAR) and glutamine to yield formylglycinamidine ribonucleotide (FGAM) and glutamate. The FGAM synthase complex is composed of three subunits. PurQ produces an ammonia molecule by converting glutamine to glutamate. PurL transfers the ammonia molecule to FGAR to form FGAM in an ATP-dependent manner. PurS interacts with PurQ and PurL and is thought to assist in the transfer of the ammonia molecule from PurQ to PurL. In Mycolicibacterium vanbaalenii (strain DSM 7251 / JCM 13017 / BCRC 16820 / KCTC 9966 / NRRL B-24157 / PYR-1) (Mycobacterium vanbaalenii), this protein is Phosphoribosylformylglycinamidine synthase subunit PurL.